The following is a 94-amino-acid chain: Translation initiation factor IF-1 (94 aa).

Residues 1–72 (MAKEELIQFE…EKGRLIFRHK (72 aa)) enclose the S1-like domain. A disordered region spans residues 71–94 (HKDERPGGTGAPRSGPPRGQFRRR).

It belongs to the IF-1 family. In terms of assembly, component of the 30S ribosomal translation pre-initiation complex which assembles on the 30S ribosome in the order IF-2 and IF-3, IF-1 and N-formylmethionyl-tRNA(fMet); mRNA recruitment can occur at any time during PIC assembly.

The protein localises to the cytoplasm. Its function is as follows. One of the essential components for the initiation of protein synthesis. Stabilizes the binding of IF-2 and IF-3 on the 30S subunit to which N-formylmethionyl-tRNA(fMet) subsequently binds. Helps modulate mRNA selection, yielding the 30S pre-initiation complex (PIC). Upon addition of the 50S ribosomal subunit IF-1, IF-2 and IF-3 are released leaving the mature 70S translation initiation complex. The sequence is that of Translation initiation factor IF-1 from Rhodopseudomonas palustris (strain HaA2).